We begin with the raw amino-acid sequence, 603 residues long: Beta-glucuronidase (603 aa).

The D-glucuronate site is built by Asp-163 and Asn-412. Residue Glu-413 is the Proton donor of the active site. The D-glucuronate site is built by Asn-466, Tyr-472, Glu-504, Trp-549, and Lys-568. Glu-504 serves as the catalytic Nucleophile. The short motif at Asn-566–Lys-568 is the N-K motif element.

This sequence belongs to the glycosyl hydrolase 2 family. Homotetramer.

The catalysed reaction is a beta-D-glucuronoside + H2O = D-glucuronate + an alcohol. It carries out the reaction 4-methylumbelliferone beta-D-glucuronate + H2O = 4-methylumbelliferone + D-glucuronate. With respect to regulation, potently inhibited by a set of synthetic compounds like thio-urea derivatives and analogs, and uronic isofagomine (UIFG) derivatives. Inhibitors of gut microbial beta-glucuronidases block the reactivation of glucuronidated cancer drugs, and thereby alleviate drug-induced GI toxicity. Its function is as follows. Displays beta-glucuronidase activity with the artificial substrate p-nitrophenyl-beta-D-glucuronide (PNPG) and with 4-methylumbelliferyl-glucuronide. Is likely capable of scavenging glucuronate from a range of chemically distinct xenobiotic and endobiotic glucuronides present in the gastrointestinal (GI) tract, to be able to utilize these diverse sources of carbon. As part of the GI microbiome, this enzyme is able to reactivate glucuronide drug conjugates, such reactivated compounds can significantly damage the GI tract. This chain is Beta-glucuronidase (uidA), found in Escherichia coli (strain K12).